The sequence spans 635 residues: Extracellular metalloproteinase 1 (635 aa).

The signal sequence occupies residues 1-19 (MHGLLLAAGLLSLPLHVLA). The propeptide occupies 20 to 246 (HPQPSTSTSL…VHNVVDYVAH (227 aa)). A glycan (N-linked (GlcNAc...) asparagine) is linked at asparagine 287. A Zn(2+)-binding site is contributed by histidine 430. Glutamate 431 is an active-site residue. Histidine 434 lines the Zn(2+) pocket. Asparagine 475, asparagine 594, and asparagine 623 each carry an N-linked (GlcNAc...) asparagine glycan.

The protein belongs to the peptidase M36 family. Requires Zn(2+) as cofactor.

The protein localises to the secreted. Functionally, secreted metalloproteinase probably acting as a virulence factor. The chain is Extracellular metalloproteinase 1 (MEP1) from Arthroderma benhamiae (Trichophyton mentagrophytes).